The following is a 151-amino-acid chain: Cytochrome c-type biogenesis protein CcmE (151 aa).

Residues 1 to 9 (MKGLKKKRR) lie on the Cytoplasmic side of the membrane. The chain crosses the membrane as a helical; Signal-anchor for type II membrane protein span at residues 10–30 (IQIIALAFVALAGSTALIGYA). The Periplasmic portion of the chain corresponds to 31–151 (MRDGINFFRS…FQHTEDQPQG (121 aa)). Positions 123 and 127 each coordinate heme.

Belongs to the CcmE/CycJ family.

It is found in the cell inner membrane. Functionally, heme chaperone required for the biogenesis of c-type cytochromes. Transiently binds heme delivered by CcmC and transfers the heme to apo-cytochromes in a process facilitated by CcmF and CcmH. This chain is Cytochrome c-type biogenesis protein CcmE, found in Cereibacter sphaeroides (strain ATCC 17029 / ATH 2.4.9) (Rhodobacter sphaeroides).